The primary structure comprises 279 residues: Four and a half LIM domains protein 2 (279 aa).

Residues Cys-7–Cys-31 form a C4-type zinc finger. 3 consecutive LIM zinc-binding domains span residues Cys-40–Cys-92, Cys-101–Cys-153, and Cys-162–Cys-212. Lys-78 is covalently cross-linked (Glycyl lysine isopeptide (Lys-Gly) (interchain with G-Cter in SUMO2)). Residues Lys-167 and Lys-220 each participate in a glycyl lysine isopeptide (Lys-Gly) (interchain with G-Cter in SUMO2) cross-link. Residues Cys-221–Cys-275 enclose the LIM zinc-binding 4 domain. Ser-238 bears the Phosphoserine mark.

Interacts with ZNF638 and TTN/titin. Interacts with E4F1. Interacts with GRB7. Interacts with SIRT1 and FOXO1. Interacts with CEFIP. Interacts with calcineurin. Interacts with FOXK1. In terms of tissue distribution, highly expressed in heart but also detectable in brain and skeletal muscle.

Its subcellular location is the cytoplasm. The protein localises to the nucleus. It localises to the myofibril. The protein resides in the sarcomere. It is found in the z line. May function as a molecular transmitter linking various signaling pathways to transcriptional regulation. Negatively regulates the transcriptional repressor E4F1 and may function in cell growth. Inhibits the transcriptional activity of FOXO1 and its apoptotic function by enhancing the interaction of FOXO1 with SIRT1 and FOXO1 deacetylation. Negatively regulates the calcineurin/NFAT signaling pathway in cardiomyocytes. This chain is Four and a half LIM domains protein 2 (Fhl2), found in Mus musculus (Mouse).